Here is a 106-residue protein sequence, read N- to C-terminus: Nucleoid-associated protein Fjoh_2555 (106 aa).

It belongs to the YbaB/EbfC family. In terms of assembly, homodimer.

Its subcellular location is the cytoplasm. The protein resides in the nucleoid. Functionally, binds to DNA and alters its conformation. May be involved in regulation of gene expression, nucleoid organization and DNA protection. The polypeptide is Nucleoid-associated protein Fjoh_2555 (Flavobacterium johnsoniae (strain ATCC 17061 / DSM 2064 / JCM 8514 / BCRC 14874 / CCUG 350202 / NBRC 14942 / NCIMB 11054 / UW101) (Cytophaga johnsonae)).